The following is a 496-amino-acid chain: E3 ubiquitin-protein ligase Hakai (496 aa).

Positions 35–60 (PNKIKPAPRPQRNMNRIPTKPQPGFD) are disordered. The RING-type; degenerate zinc-finger motif lies at 104 to 144 (CDKCGLPIKIYGRMIPCKHVFCYDCALMHEKKADKLCPGTL). The segment at 157-215 (CNDPVQRIEQCARGSLFMCSIVQGCKRTYLSQRDLQAHINHRHMRASKPTARPQPEPIH) is HYB domain. The segment at 173–199 (FMCSIVQGCKRTYLSQRDLQAHINHRH) adopts a C2H2-type zinc-finger fold. Residues 304–314 (VPIQDDSNSGA) are compositionally biased toward polar residues. Residues 304–496 (VPIQDDSNSG…DQARYRPYYQ (193 aa)) are disordered. Composition is skewed to pro residues over residues 350–360 (APPPPPPPPIS), 380–397 (GPPP…PPPG), and 407–430 (MNHP…PPHH). Residues 434-449 (SSMPQFNEDQGTLSPP) show a composition bias toward polar residues. Residues 464–483 (PRGPPPRMQGPPSQAPMPGP) are compositionally biased toward pro residues.

Belongs to the Hakai family. In terms of assembly, homodimer. Interacts with tyrosine-phosphorylated SRC substrates. Component of the WMM complex, a N6-methyltransferase complex composed of a catalytic subcomplex, named MAC, and of an associated subcomplex, named MACOM. Component of the MACOM subcomplex.

The protein localises to the nucleus speckle. It is found in the nucleus. It localises to the nucleoplasm. The enzyme catalyses S-ubiquitinyl-[E2 ubiquitin-conjugating enzyme]-L-cysteine + [acceptor protein]-L-lysine = [E2 ubiquitin-conjugating enzyme]-L-cysteine + N(6)-ubiquitinyl-[acceptor protein]-L-lysine.. The protein operates within protein modification; protein ubiquitination. Its function is as follows. E3 ubiquitin-protein ligase that mediates ubiquitination of several tyrosine-phosphorylated Src substrates. Associated component of the WMM complex, a complex that mediates N6-methyladenosine (m6A) methylation of RNAs, a modification that plays a role in the efficiency of mRNA splicing and RNA processing. The chain is E3 ubiquitin-protein ligase Hakai from Xenopus laevis (African clawed frog).